The chain runs to 355 residues: Alkanal monooxygenase alpha chain (355 aa).

This sequence belongs to the bacterial luciferase oxidoreductase family. Heterodimer of an alpha and a beta chain.

It carries out the reaction a long-chain fatty aldehyde + FMNH2 + O2 = a long-chain fatty acid + hnu + FMN + H2O + 2 H(+). Functionally, light-emitting reaction in luminous bacteria. In Vibrio harveyi (Beneckea harveyi), this protein is Alkanal monooxygenase alpha chain (luxA).